Reading from the N-terminus, the 461-residue chain is Bifunctional protein GlmU (461 aa).

The interval 1–229 (MEKYVVVLAA…FSESLGVNDR (229 aa)) is pyrophosphorylase. UDP-N-acetyl-alpha-D-glucosamine is bound by residues 8-11 (LAAG), Lys22, Gln72, and 77-78 (GT). Residue Asp102 participates in Mg(2+) binding. 4 residues coordinate UDP-N-acetyl-alpha-D-glucosamine: Gly139, Glu154, Asn169, and Asn227. Asn227 contributes to the Mg(2+) binding site. The segment at 230–250 (VALAQATKTMQRRINEAHMRD) is linker. The tract at residues 251–461 (GVSFIDPDTA…LPLSKDKDWE (211 aa)) is N-acetyltransferase. UDP-N-acetyl-alpha-D-glucosamine contacts are provided by Arg332 and Lys350. The active-site Proton acceptor is the His362. The UDP-N-acetyl-alpha-D-glucosamine site is built by Tyr365 and Asn376. Residues 385-386 (NY), Ala422, and Arg439 contribute to the acetyl-CoA site.

It in the N-terminal section; belongs to the N-acetylglucosamine-1-phosphate uridyltransferase family. The protein in the C-terminal section; belongs to the transferase hexapeptide repeat family. In terms of assembly, homotrimer. It depends on Mg(2+) as a cofactor.

The protein resides in the cytoplasm. It carries out the reaction alpha-D-glucosamine 1-phosphate + acetyl-CoA = N-acetyl-alpha-D-glucosamine 1-phosphate + CoA + H(+). The catalysed reaction is N-acetyl-alpha-D-glucosamine 1-phosphate + UTP + H(+) = UDP-N-acetyl-alpha-D-glucosamine + diphosphate. It functions in the pathway nucleotide-sugar biosynthesis; UDP-N-acetyl-alpha-D-glucosamine biosynthesis; N-acetyl-alpha-D-glucosamine 1-phosphate from alpha-D-glucosamine 6-phosphate (route II): step 2/2. The protein operates within nucleotide-sugar biosynthesis; UDP-N-acetyl-alpha-D-glucosamine biosynthesis; UDP-N-acetyl-alpha-D-glucosamine from N-acetyl-alpha-D-glucosamine 1-phosphate: step 1/1. It participates in bacterial outer membrane biogenesis; LPS lipid A biosynthesis. Functionally, catalyzes the last two sequential reactions in the de novo biosynthetic pathway for UDP-N-acetylglucosamine (UDP-GlcNAc). The C-terminal domain catalyzes the transfer of acetyl group from acetyl coenzyme A to glucosamine-1-phosphate (GlcN-1-P) to produce N-acetylglucosamine-1-phosphate (GlcNAc-1-P), which is converted into UDP-GlcNAc by the transfer of uridine 5-monophosphate (from uridine 5-triphosphate), a reaction catalyzed by the N-terminal domain. The polypeptide is Bifunctional protein GlmU (Lactobacillus helveticus (strain DPC 4571)).